The sequence spans 239 residues: Uridylate kinase (239 aa).

Residue 13–16 (KLSG) coordinates ATP. G55 serves as a coordination point for UMP. ATP-binding residues include G56 and R60. Residues D75 and 136 to 143 (TGNPFFTT) contribute to the UMP site. T163, N164, Y169, and D172 together coordinate ATP.

The protein belongs to the UMP kinase family. As to quaternary structure, homohexamer.

The protein resides in the cytoplasm. It catalyses the reaction UMP + ATP = UDP + ADP. The protein operates within pyrimidine metabolism; CTP biosynthesis via de novo pathway; UDP from UMP (UMPK route): step 1/1. Its activity is regulated as follows. Inhibited by UTP. In terms of biological role, catalyzes the reversible phosphorylation of UMP to UDP. In Neisseria meningitidis serogroup C / serotype 2a (strain ATCC 700532 / DSM 15464 / FAM18), this protein is Uridylate kinase.